The primary structure comprises 68 residues: MKFSCGFLLIFLVLSAMIATFSEVEATVKCGGCNRKCCAGGCRSGKCINGKCQCYGRSDLNEEFENYQ.

The first 26 residues, Met1–Ala26, serve as a signal peptide directing secretion. 4 cysteine pairs are disulfide-bonded: Cys30/Cys38, Cys33/Cys54, Cys37/Cys47, and Cys42/Cys52. Tyr55 carries the tyrosine amide modification. The propeptide occupies Arg57 to Gln68.

This sequence belongs to the short scorpion toxin superfamily. Potassium channel inhibitor family. Epsilon-KTx 01 subfamily. Expressed by the venom gland.

It is found in the secreted. Potassium channel blocker. At 3 uM, this toxin blocks voltage-gated potassium channels rKv1.2/KCNA2 (5%), hKv1.3/KCNA3 (10%),rKv1.4/KCNA4 (20%), Kv11/hERG (24%), and Shaker-IR (27%). The protein is Potassium channel toxin epsilon-KTx 1.2 of Tityus serrulatus (Brazilian scorpion).